The sequence spans 429 residues: Adenylosuccinate synthetase (429 aa).

GTP-binding positions include 12–18 and 40–42; these read GDEGKGK and GHT. Asp-13 functions as the Proton acceptor in the catalytic mechanism. Residues Asp-13 and Gly-40 each contribute to the Mg(2+) site. IMP-binding positions include 13 to 16, 38 to 41, Thr-128, Arg-142, Gln-223, Thr-238, and Arg-302; these read DEGK and NAGH. Residue His-41 is the Proton donor of the active site. 298–304 lines the substrate pocket; sequence TVTGRPR. Residues Arg-304, 330 to 332, and 412 to 414 contribute to the GTP site; these read LLD and SVG.

It belongs to the adenylosuccinate synthetase family. Homodimer. Mg(2+) is required as a cofactor.

It localises to the cytoplasm. The catalysed reaction is IMP + L-aspartate + GTP = N(6)-(1,2-dicarboxyethyl)-AMP + GDP + phosphate + 2 H(+). It participates in purine metabolism; AMP biosynthesis via de novo pathway; AMP from IMP: step 1/2. Functionally, plays an important role in the de novo pathway of purine nucleotide biosynthesis. Catalyzes the first committed step in the biosynthesis of AMP from IMP. This Lactobacillus johnsonii (strain CNCM I-12250 / La1 / NCC 533) protein is Adenylosuccinate synthetase.